A 408-amino-acid polypeptide reads, in one-letter code: Aminoacylase-1 (408 aa).

H76 lines the Zn(2+) pocket. The active site involves D78. D109 contributes to the Zn(2+) binding site. The active-site Proton acceptor is E143. Zn(2+) contacts are provided by E144, E172, and H379.

This sequence belongs to the peptidase M20A family. As to quaternary structure, homodimer. Zn(2+) is required as a cofactor.

It is found in the cytoplasm. The enzyme catalyses an N-acyl-L-amino acid + H2O = an L-alpha-amino acid + a carboxylate. It carries out the reaction an N-acetyl-L-cysteine-S-conjugate + H2O = an S-substituted L-cysteine + acetate. Functionally, involved in the hydrolysis of N-acylated or N-acetylated amino acids (except L-aspartate). This chain is Aminoacylase-1 (acy1), found in Dictyostelium discoideum (Social amoeba).